The primary structure comprises 230 residues: Acyl-protein thioesterase 1 (230 aa).

Residues S119, D174, and H208 each act as charge relay system in the active site. Residue K224 is modified to N6-acetyllysine.

Belongs to the AB hydrolase superfamily. AB hydrolase 2 family. As to quaternary structure, homodimer.

The protein resides in the cytoplasm. The protein localises to the cell membrane. It localises to the nucleus membrane. Its subcellular location is the endoplasmic reticulum. It carries out the reaction S-hexadecanoyl-L-cysteinyl-[protein] + H2O = L-cysteinyl-[protein] + hexadecanoate + H(+). The enzyme catalyses 1-hexadecanoyl-sn-glycero-3-phosphocholine + H2O = sn-glycerol 3-phosphocholine + hexadecanoate + H(+). It catalyses the reaction a 1-(9Z-octadecenoyl)-2-acyl-sn-glycero-3-phosphocholine + H2O = a 2-acyl-sn-glycero-3-phosphocholine + (9Z)-octadecenoate + H(+). In terms of biological role, acts as an acyl-protein thioesterase. Hydrolyzes fatty acids from S-acylated cysteine residues in proteins such as trimeric G alpha proteins or HRAS. Acts as a palmitoyl thioesterase that catalyzes depalmitoylation of proteins, such as ADRB2, KCNMA1 and SQSTM1. Acts as a negative regulator of autophagy by mediating palmitoylation of SQSTM1, decreasing affinity between SQSTM1 and ATG8 proteins and recruitment of ubiquitinated cargo proteins to autophagosomes. Acts as a lysophospholipase and hydrolyzes lysophosphatidylcholine (lyso-PC). Also hydrolyzes lysophosphatidylethanolamine (lyso-PE), lysophosphatidylinositol (lyso-PI) and lysophosphatidylserine (lyso-PS). Has much higher thioesterase activity than lysophospholipase activity. Contributes to the production of lysophosphatidic acid (LPA) during blood coagulation by recognizing and cleaving plasma phospholipids to generate lysophospholipids which in turn act as substrates for ENPP2 to produce LPA. In Pongo abelii (Sumatran orangutan), this protein is Acyl-protein thioesterase 1 (LYPLA1).